A 691-amino-acid polypeptide reads, in one-letter code: Seven transmembrane domain-containing tyrosine-protein kinase 1 (691 aa).

The Extracellular segment spans residues 1 to 33; it reads MDTSCVSINQCGFCTYLFNRSIPLAGEGDGAIM. A helical transmembrane segment spans residues 34–54; the sequence is FNTMVDSMALGYIFSALYLLF. Residues 55–126 are Cytoplasmic-facing; that stretch reads RLQRSYTYLQ…PRIINSTYFK (72 aa). The chain crosses the membrane as a helical span at residues 127–144; it reads YTLFVSLWLAFEGLLLLF. The Extracellular portion of the chain corresponds to 145–153; that stretch reads LPPNSLAYP. A helical transmembrane segment spans residues 154–176; it reads AFVIIVGTGHIVTDNWVLVFLYG. Residues 177 to 186 are Cytoplasmic-facing; that stretch reads KEDDRFSARR. A helical transmembrane segment spans residues 187 to 207; sequence SFYSCTLLYLIICCTTLASFF. The Extracellular portion of the chain corresponds to 208-227; it reads DDQTMCKKNDCQTFMFQDEY. Residues 228-248 traverse the membrane as a helical segment; that stretch reads TSLAITVASLVVYTIVLGMTI. At 249-258 the chain is on the cytoplasmic side; it reads KRSFLRPTGR. A helical transmembrane segment spans residues 259–279; that stretch reads IWLLFLMGYNCISSVGALLNI. At 280–284 the chain is on the extracellular side; sequence LDVDA. The helical transmembrane segment at 285 to 305 threads the bilayer; the sequence is GYCFLGIAAIIYSFSYGPLLF. The Cytoplasmic segment spans residues 306 to 691; it reads RTCGNDTNLL…GAEEFHYIDG (386 aa). A Protein kinase domain is found at 363–634; sequence FKFGQVIGEG…ANVPISNTYV (272 aa). ATP is bound by residues 369-377 and lysine 390; that span reads IGEGYFGEV. The active-site Proton acceptor is aspartate 493.

The protein belongs to the protein kinase superfamily. TKL Tyr protein kinase family.

It is found in the membrane. The enzyme catalyses L-tyrosyl-[protein] + ATP = O-phospho-L-tyrosyl-[protein] + ADP + H(+). This chain is Seven transmembrane domain-containing tyrosine-protein kinase 1 (7tmk1), found in Dictyostelium discoideum (Social amoeba).